We begin with the raw amino-acid sequence, 493 residues long: Protein LTV1 homolog (493 aa).

Disordered stretches follow at residues 42–63, 97–119, and 170–207; these read AAAR…QRQE, PNQA…KLML, and IQAM…DENE. The segment covering 176–207 has biased composition (acidic residues); the sequence is GDSDDEEWDDEDGEEQSDMDFDSDDLNEDENE. Residues serine 345, serine 369, serine 370, serine 424, and serine 427 each carry the phosphoserine modification. The disordered stretch occupies residues 359–387; it reads VIDEPRRSRRSSASTNPAPIQIDPKTGLP. Positions 437–468 form a coiled coil; the sequence is KDETHEEKKERKRLLKDYRNERRIEKKANTEA. The segment covering 465-474 has biased composition (basic and acidic residues); sequence NTEAFKEEKK. The disordered stretch occupies residues 465–493; the sequence is NTEAFKEEKKRQTHVKINQRTNQQGASIV. The span at 479–493 shows a compositional bias: polar residues; sequence VKINQRTNQQGASIV.

The protein belongs to the LTV1 family. In terms of assembly, interacts with RpS3; the interaction is RNA-independent. Associates with free 40S ribosome subunits.

It localises to the cytoplasm. In terms of biological role, necessary for the biogenesis of 40S ribosome subunits by regulating pre-rRNA processing. Non-ribosomal factor required for efficient nuclear export of the ribosomal 40S subunit. Necessary for endoreplication driven by Myc. The sequence is that of Protein LTV1 homolog from Drosophila melanogaster (Fruit fly).